Here is a 60-residue protein sequence, read N- to C-terminus: Large ribosomal subunit protein bL32 (60 aa).

2 disordered regions span residues 1–22 (MAVQ…HNAL) and 34–60 (GETH…KSEA). A compositionally biased stretch (basic residues) spans 9–19 (SPSKRGMHRSH).

Belongs to the bacterial ribosomal protein bL32 family.

This chain is Large ribosomal subunit protein bL32, found in Variovorax paradoxus (strain S110).